A 679-amino-acid chain; its full sequence is NADPH--cytochrome P450 reductase (679 aa).

Residues 1–21 (MADSHGDTGATMPEAAAQEAS) lie on the Lumenal side of the membrane. Residues 22–42 (VFSMTDVVLFSLIVGLITYWF) traverse the membrane as a helical segment. Residues 43–679 (LFRKKKEEVP…KGRYSLDVWS (637 aa)) lie on the Cytoplasmic side of the membrane. Ser64 bears the Phosphoserine mark. The Flavodoxin-like domain maps to 81 to 225 (IVVFYGSQTG…DFITWREQFW (145 aa)). Residues 87-92 (SQTGTA), 139-142 (ATYG), 174-183 (LGNKTYEHFN), and Asp209 each bind FMN. The FAD-binding FR-type domain occupies 280 to 522 (KNPFLATVTT…FVRKSQFRLP (243 aa)). An NADP(+)-binding site is contributed by Arg299. FAD is bound by residues Arg425, 455 to 458 (RYYS), 473 to 475 (CAV), Tyr479, and 489 to 492 (GVAT). Residues Thr536, 597-598 (SR), 603-607 (KVYVQ), and Asp640 each bind NADP(+). Position 678 (Trp678) interacts with FAD.

The protein belongs to the NADPH--cytochrome P450 reductase family. This sequence in the N-terminal section; belongs to the flavodoxin family. In the C-terminal section; belongs to the flavoprotein pyridine nucleotide cytochrome reductase family. FAD is required as a cofactor. Requires FMN as cofactor.

It is found in the endoplasmic reticulum membrane. It carries out the reaction 2 oxidized [cytochrome P450] + NADPH = 2 reduced [cytochrome P450] + NADP(+) + H(+). In terms of biological role, this enzyme is required for electron transfer from NADP to cytochrome P450 in microsomes. It can also provide electron transfer to heme oxygenase and cytochrome B5. In Oryctolagus cuniculus (Rabbit), this protein is NADPH--cytochrome P450 reductase.